We begin with the raw amino-acid sequence, 267 residues long: tRNA pseudouridine synthase A (267 aa).

Catalysis depends on D51, which acts as the Nucleophile. Y109 contributes to the substrate binding site.

Belongs to the tRNA pseudouridine synthase TruA family. As to quaternary structure, homodimer.

It carries out the reaction uridine(38/39/40) in tRNA = pseudouridine(38/39/40) in tRNA. Its function is as follows. Formation of pseudouridine at positions 38, 39 and 40 in the anticodon stem and loop of transfer RNAs. This Staphylococcus saprophyticus subsp. saprophyticus (strain ATCC 15305 / DSM 20229 / NCIMB 8711 / NCTC 7292 / S-41) protein is tRNA pseudouridine synthase A.